Consider the following 84-residue polypeptide: Dolichol phosphate-mannose biosynthesis regulatory protein (84 aa).

2 helical membrane-spanning segments follow: residues 11–31 (LGLV…VILL) and 49–69 (YAVA…GLFI).

The protein belongs to the DPM2 family. Component of the dolichol-phosphate mannose (DPM) synthase complex composed of DPM1, DPM2 and DPM3; in the complex interacts directly with DPM3. Component of the glycosylphosphatidylinositol-N-acetylglucosaminyltransferase (GPI-GnT) complex composed at least by PIGA, PIGC, PIGH, PIGP, PIGQ, PIGY and DPM2. Interacts with PIGA, PIGC and PIGQ.

The protein localises to the endoplasmic reticulum membrane. The protein operates within protein modification; protein glycosylation. Functionally, regulates the biosynthesis of dolichol phosphate-mannose. Regulatory subunit of the dolichol-phosphate mannose (DPM) synthase complex; essential for the ER localization and stable expression of DPM1. Part of the glycosylphosphatidylinositol-N-acetylglucosaminyltransferase (GPI-GnT) complex that catalyzes the transfer of N-acetylglucosamine from UDP-N-acetylglucosamine to phosphatidylinositol and participates in the first step of GPI biosynthesis. May act by regulating the GPI-GNT complex. The sequence is that of Dolichol phosphate-mannose biosynthesis regulatory protein from Homo sapiens (Human).